The sequence spans 347 residues: Syntaxin-32 (347 aa).

The Cytoplasmic portion of the chain corresponds to 1–325; it reads MSARHGQSSY…RYLNSISSNR (325 aa). 2 disordered regions span residues 172-191 and 208-251; these read HESR…TNPF and PLPW…QQMV. 2 stretches are compositionally biased toward polar residues: residues 177-191 and 213-222; these read QLFS…TNPF and NGSSSSSSQL. Over residues 237 to 249 the composition is skewed to low complexity; sequence QQSQQQQQQQQQQ. The t-SNARE coiled-coil homology domain occupies 255–317; that stretch reads DTYMQGRAEA…EGAQSQLARY (63 aa). The helical; Anchor for type IV membrane protein transmembrane segment at 326 to 346 threads the bilayer; sequence WLMMKIFFVLIAFLMIFLFFV. Position 347 (Ala-347) is a topological domain, vesicular.

It belongs to the syntaxin family. Part of the t-SNARE complex.

The protein resides in the golgi apparatus. The protein localises to the cis-Golgi network membrane. In terms of biological role, vesicle trafficking protein that functions in the secretory pathway. The sequence is that of Syntaxin-32 (SYP32) from Arabidopsis thaliana (Mouse-ear cress).